A 217-amino-acid polypeptide reads, in one-letter code: Adapter protein MecA (217 aa).

The protein belongs to the MecA family. As to quaternary structure, homodimer.

In terms of biological role, enables the recognition and targeting of unfolded and aggregated proteins to the ClpC protease or to other proteins involved in proteolysis. The sequence is that of Adapter protein MecA from Listeria innocua serovar 6a (strain ATCC BAA-680 / CLIP 11262).